A 401-amino-acid chain; its full sequence is Probable 2,3-bisphosphoglycerate-independent phosphoglycerate mutase (401 aa).

Belongs to the BPG-independent phosphoglycerate mutase family. A-PGAM subfamily.

The catalysed reaction is (2R)-2-phosphoglycerate = (2R)-3-phosphoglycerate. Its pathway is carbohydrate degradation; glycolysis; pyruvate from D-glyceraldehyde 3-phosphate: step 3/5. Its function is as follows. Catalyzes the interconversion of 2-phosphoglycerate and 3-phosphoglycerate. This is Probable 2,3-bisphosphoglycerate-independent phosphoglycerate mutase from Thermotoga sp. (strain RQ2).